The primary structure comprises 262 residues: tRNA pseudouridine synthase A (262 aa).

The active-site Nucleophile is aspartate 51. A substrate-binding site is contributed by tyrosine 109.

This sequence belongs to the tRNA pseudouridine synthase TruA family. Homodimer.

It catalyses the reaction uridine(38/39/40) in tRNA = pseudouridine(38/39/40) in tRNA. In terms of biological role, formation of pseudouridine at positions 38, 39 and 40 in the anticodon stem and loop of transfer RNAs. The protein is tRNA pseudouridine synthase A of Legionella pneumophila (strain Paris).